The chain runs to 581 residues: 2-succinyl-5-enolpyruvyl-6-hydroxy-3-cyclohexene-1-carboxylate synthase (581 aa).

It belongs to the TPP enzyme family. MenD subfamily. Homodimer. Mg(2+) is required as a cofactor. It depends on Mn(2+) as a cofactor. The cofactor is thiamine diphosphate.

The catalysed reaction is isochorismate + 2-oxoglutarate + H(+) = 5-enolpyruvoyl-6-hydroxy-2-succinyl-cyclohex-3-ene-1-carboxylate + CO2. It functions in the pathway quinol/quinone metabolism; 1,4-dihydroxy-2-naphthoate biosynthesis; 1,4-dihydroxy-2-naphthoate from chorismate: step 2/7. Its pathway is quinol/quinone metabolism; menaquinone biosynthesis. Its function is as follows. Catalyzes the thiamine diphosphate-dependent decarboxylation of 2-oxoglutarate and the subsequent addition of the resulting succinic semialdehyde-thiamine pyrophosphate anion to isochorismate to yield 2-succinyl-5-enolpyruvyl-6-hydroxy-3-cyclohexene-1-carboxylate (SEPHCHC). This Chlorobium phaeobacteroides (strain BS1) protein is 2-succinyl-5-enolpyruvyl-6-hydroxy-3-cyclohexene-1-carboxylate synthase.